The chain runs to 165 residues: MLAVIRIRGRTGIKEDIADTAHLMRLNRINHLVLLNENEVVKGMLQKVKDYVTWGEIDLDTLELLLKNRLLFRGRKHLTEEELKEKTGFTSYRDLAQALIDGKIKPSEIADAVPVIRLNPPKGGYEAIRKSYRSGGSSGYRGSDINQLIRRMIISGVDLNGKREN.

It belongs to the universal ribosomal protein uL30 family. Part of the 50S ribosomal subunit.

The polypeptide is Large ribosomal subunit protein uL30 (Thermoplasma acidophilum (strain ATCC 25905 / DSM 1728 / JCM 9062 / NBRC 15155 / AMRC-C165)).